Consider the following 364-residue polypeptide: UDP-N-acetylglucosamine--N-acetylmuramyl-(pentapeptide) pyrophosphoryl-undecaprenol N-acetylglucosamine transferase (364 aa).

UDP-N-acetyl-alpha-D-glucosamine-binding positions include 16–18 (TGG), asparagine 128, arginine 166, serine 195, isoleucine 249, and glutamine 294.

This sequence belongs to the glycosyltransferase 28 family. MurG subfamily.

Its subcellular location is the cell inner membrane. It carries out the reaction di-trans,octa-cis-undecaprenyl diphospho-N-acetyl-alpha-D-muramoyl-L-alanyl-D-glutamyl-meso-2,6-diaminopimeloyl-D-alanyl-D-alanine + UDP-N-acetyl-alpha-D-glucosamine = di-trans,octa-cis-undecaprenyl diphospho-[N-acetyl-alpha-D-glucosaminyl-(1-&gt;4)]-N-acetyl-alpha-D-muramoyl-L-alanyl-D-glutamyl-meso-2,6-diaminopimeloyl-D-alanyl-D-alanine + UDP + H(+). Its pathway is cell wall biogenesis; peptidoglycan biosynthesis. Functionally, cell wall formation. Catalyzes the transfer of a GlcNAc subunit on undecaprenyl-pyrophosphoryl-MurNAc-pentapeptide (lipid intermediate I) to form undecaprenyl-pyrophosphoryl-MurNAc-(pentapeptide)GlcNAc (lipid intermediate II). The sequence is that of UDP-N-acetylglucosamine--N-acetylmuramyl-(pentapeptide) pyrophosphoryl-undecaprenol N-acetylglucosamine transferase from Chromohalobacter salexigens (strain ATCC BAA-138 / DSM 3043 / CIP 106854 / NCIMB 13768 / 1H11).